Here is a 92-residue protein sequence, read N- to C-terminus: DNA-binding protein HU (92 aa).

The protein belongs to the bacterial histone-like protein family. As to quaternary structure, homodimer.

Its function is as follows. Histone-like DNA-binding protein which is capable of wrapping DNA to stabilize it, and thus to prevent its denaturation under extreme environmental conditions. The sequence is that of DNA-binding protein HU (hup) from Buchnera aphidicola subsp. Acyrthosiphon pisum (strain APS) (Acyrthosiphon pisum symbiotic bacterium).